The following is a 386-amino-acid chain: Chaperone protein DnaJ (386 aa).

The 65-residue stretch at 6–70 (DYYEVLGVDK…QKRAAYDQYG (65 aa)) folds into the J domain. Residues 141–223 (GKDTEVSYKR…CHGTGHEKKT (83 aa)) form a CR-type zinc finger. Zn(2+)-binding residues include Cys-154, Cys-157, Cys-171, Cys-174, Cys-197, Cys-200, Cys-211, and Cys-214. CXXCXGXG motif repeat units lie at residues 154-161 (CHTCGGNG), 171-178 (CHKCKGSG), 197-204 (CDVCHGTG), and 211-218 (CETCHGTG). Residues 363 to 386 (LTGQSTEEQQSEGFFDKMKDAFKK) form a disordered region. Residues 364–374 (TGQSTEEQQSE) show a composition bias toward polar residues. The span at 376 to 386 (FFDKMKDAFKK) shows a compositional bias: basic and acidic residues.

Belongs to the DnaJ family. As to quaternary structure, homodimer. Requires Zn(2+) as cofactor.

The protein localises to the cytoplasm. Functionally, participates actively in the response to hyperosmotic and heat shock by preventing the aggregation of stress-denatured proteins and by disaggregating proteins, also in an autonomous, DnaK-independent fashion. Unfolded proteins bind initially to DnaJ; upon interaction with the DnaJ-bound protein, DnaK hydrolyzes its bound ATP, resulting in the formation of a stable complex. GrpE releases ADP from DnaK; ATP binding to DnaK triggers the release of the substrate protein, thus completing the reaction cycle. Several rounds of ATP-dependent interactions between DnaJ, DnaK and GrpE are required for fully efficient folding. Also involved, together with DnaK and GrpE, in the DNA replication of plasmids through activation of initiation proteins. In Tetragenococcus halophilus (Pediococcus halophilus), this protein is Chaperone protein DnaJ.